The following is a 1038-amino-acid chain: Type I restriction enzyme EcoR124I/EcoR124II endonuclease subunit (1038 aa).

Residues glutamine 31–glutamine 249 are nuclease domain. The tract at residues lysine 250 to aspartate 469 is motor 1 domain. Residues lysine 294–isoleucine 439 form the Helicase ATP-binding domain. Histidine 307–threonine 314 is a binding site for ATP. The DEAH box signature appears at aspartate 408 to histidine 411. The segment at glutamate 470–isoleucine 702 is motor 2 domain. A motor 2-helicase linker region spans residues glycine 720 to serine 732. The tract at residues serine 732 to glutamate 860 is helicase domain. A helicase-CTD linker region spans residues arginine 859–glutamine 886. Residues glutamine 886 to isoleucine 1038 form a C-terminal domain region.

It belongs to the HsdR family. As to quaternary structure, a monomer in solution. The type I restriction/modification system is composed of three polypeptides R, M and S; the restriction enzyme has stoichiometry R(2)M(2)S(1) while the methyltransferase is M(2)S(1). There is an equilibrium between R(2)M(2)S(1) and R(1)M(2)S(1); the latter is methylation and translocation proficient but restriction deficient. In terms of assembly, (Microbial infection) Holoenenzyme interacts with Escherichia phage T7 protein Ocr; this interaction leads to the inhibition of the restriction activity, but may still allow methylation and translocation.

It carries out the reaction Endonucleolytic cleavage of DNA to give random double-stranded fragments with terminal 5'-phosphates, ATP is simultaneously hydrolyzed.. Functionally, the restriction (R) subunit of a type I restriction enzyme that recognizes 5'-GAAN(6)RTCG-3' (for EcoR124I) and 5'-GAAN(7)RTCG-3' (for EcoR124II) and cleaves a random distance away. Subunit R is required for both nuclease and ATPase activities, but not for modification. After locating an unmethylated recognition site, the enzyme complex serves as a molecular motor that translocates DNA in an ATP-dependent manner until a collision occurs that triggers cleavage. The enzyme undergoes major structural changes to bring the motor domains into contact with DNA, allowing DNA translocation. This prevents DNA access to the catalytic domains of both the R and M subunits, preventing both restriction and methylation. The R(1)M(2)S(1) complex translocates an average of 555 bp/second on nicked DNA; the R(2)M(2)S(1) complex translocates at double that speed. The 2 R subunit motors are independent and track along the helical pitch of the DNA, inducing positive supercoiling ahead of themselves. This Escherichia coli protein is Type I restriction enzyme EcoR124I/EcoR124II endonuclease subunit.